A 323-amino-acid chain; its full sequence is Fructose-1,6-bisphosphatase class 1 (323 aa).

Mg(2+) is bound by residues glutamate 88, aspartate 107, leucine 109, and aspartate 110. Substrate contacts are provided by residues 110-113 (DGSS) and asparagine 200. Residue glutamate 272 participates in Mg(2+) binding.

It belongs to the FBPase class 1 family. Homotetramer. Mg(2+) is required as a cofactor.

Its subcellular location is the cytoplasm. The catalysed reaction is beta-D-fructose 1,6-bisphosphate + H2O = beta-D-fructose 6-phosphate + phosphate. It functions in the pathway carbohydrate biosynthesis; gluconeogenesis. This is Fructose-1,6-bisphosphatase class 1 from Acinetobacter baumannii (strain ATCC 17978 / DSM 105126 / CIP 53.77 / LMG 1025 / NCDC KC755 / 5377).